We begin with the raw amino-acid sequence, 1220 residues long: DNA polymerase catalytic subunit (1220 aa).

2 disordered regions span residues 21–43 and 641–691; these read GKRP…RPPQ and QADA…KPGV. Over residues 646–660 the composition is skewed to polar residues; that stretch reads SETSELAMDSQSHAF.

It belongs to the DNA polymerase type-B family. Forms a complex with the ssDNA-binding protein, the DNA polymerase processivity factor, and the alkaline exonuclease. Interacts with the helicase-primase complex composed of the primase, the helicase and the primase-associated factor; this interaction may coordinate leading and lagging strand DNA synthesis at the replication fork.

It is found in the host nucleus. The enzyme catalyses DNA(n) + a 2'-deoxyribonucleoside 5'-triphosphate = DNA(n+1) + diphosphate. The catalysed reaction is Endonucleolytic cleavage to 5'-phosphomonoester.. Replicates viral genomic DNA. The replication complex is composed of six viral proteins: the DNA polymerase, processivity factor, primase, primase-associated factor, helicase, and ssDNA-binding protein. Additionally, the polymerase contains an intrinsic ribonuclease H (RNase H) activity that specifically degrades RNA/DNA heteroduplexes or duplex DNA substrates in the 5' to 3' direction. Therefore, it can catalyze the excision of the RNA primers that initiate the synthesis of Okazaki fragments at a replication fork during viral DNA replication. The chain is DNA polymerase catalytic subunit from Equine herpesvirus 1 (strain Ab4p) (EHV-1).